Consider the following 494-residue polypeptide: UPF0371 protein SpyM3_1021 (494 aa).

Belongs to the UPF0371 family.

The polypeptide is UPF0371 protein SpyM3_1021 (Streptococcus pyogenes serotype M3 (strain ATCC BAA-595 / MGAS315)).